The following is a 324-amino-acid chain: Beta-ketoacyl-[acyl-carrier-protein] synthase III (324 aa).

Residues C112 and H249 contribute to the active site. The segment at 250 to 254 (QANDR) is ACP-binding. The active site involves N279.

It belongs to the thiolase-like superfamily. FabH family. As to quaternary structure, homodimer.

It localises to the cytoplasm. It catalyses the reaction malonyl-[ACP] + acetyl-CoA + H(+) = 3-oxobutanoyl-[ACP] + CO2 + CoA. The protein operates within lipid metabolism; fatty acid biosynthesis. Functionally, catalyzes the condensation reaction of fatty acid synthesis by the addition to an acyl acceptor of two carbons from malonyl-ACP. Catalyzes the first condensation reaction which initiates fatty acid synthesis and may therefore play a role in governing the total rate of fatty acid production. Possesses both acetoacetyl-ACP synthase and acetyl transacylase activities. Its substrate specificity determines the biosynthesis of branched-chain and/or straight-chain of fatty acids. The protein is Beta-ketoacyl-[acyl-carrier-protein] synthase III of Streptococcus pneumoniae serotype 2 (strain D39 / NCTC 7466).